A 336-amino-acid chain; its full sequence is Holliday junction branch migration complex subunit RuvB (336 aa).

The segment at 4 to 184 (ADRLISAGTT…FGIVQRLEFY (181 aa)) is large ATPase domain (RuvB-L). ATP contacts are provided by residues isoleucine 23, arginine 24, glycine 65, lysine 68, threonine 69, threonine 70, 131–133 (EDY), arginine 174, tyrosine 184, and arginine 221. Mg(2+) is bound at residue threonine 69. Residues 185–255 (QVPDLQYIVS…IAAQALDMLN (71 aa)) form a small ATPAse domain (RuvB-S) region. The interval 258 to 336 (AEGFDYMDRK…HFGITPPEMP (79 aa)) is head domain (RuvB-H). Residues arginine 294, arginine 313, and arginine 318 each contribute to the DNA site.

Belongs to the RuvB family. In terms of assembly, homohexamer. Forms an RuvA(8)-RuvB(12)-Holliday junction (HJ) complex. HJ DNA is sandwiched between 2 RuvA tetramers; dsDNA enters through RuvA and exits via RuvB. An RuvB hexamer assembles on each DNA strand where it exits the tetramer. Each RuvB hexamer is contacted by two RuvA subunits (via domain III) on 2 adjacent RuvB subunits; this complex drives branch migration. In the full resolvosome a probable DNA-RuvA(4)-RuvB(12)-RuvC(2) complex forms which resolves the HJ.

It is found in the cytoplasm. It carries out the reaction ATP + H2O = ADP + phosphate + H(+). The RuvA-RuvB-RuvC complex processes Holliday junction (HJ) DNA during genetic recombination and DNA repair, while the RuvA-RuvB complex plays an important role in the rescue of blocked DNA replication forks via replication fork reversal (RFR). RuvA specifically binds to HJ cruciform DNA, conferring on it an open structure. The RuvB hexamer acts as an ATP-dependent pump, pulling dsDNA into and through the RuvAB complex. RuvB forms 2 homohexamers on either side of HJ DNA bound by 1 or 2 RuvA tetramers; 4 subunits per hexamer contact DNA at a time. Coordinated motions by a converter formed by DNA-disengaged RuvB subunits stimulates ATP hydrolysis and nucleotide exchange. Immobilization of the converter enables RuvB to convert the ATP-contained energy into a lever motion, pulling 2 nucleotides of DNA out of the RuvA tetramer per ATP hydrolyzed, thus driving DNA branch migration. The RuvB motors rotate together with the DNA substrate, which together with the progressing nucleotide cycle form the mechanistic basis for DNA recombination by continuous HJ branch migration. Branch migration allows RuvC to scan DNA until it finds its consensus sequence, where it cleaves and resolves cruciform DNA. This Shigella sonnei (strain Ss046) protein is Holliday junction branch migration complex subunit RuvB.